Here is an 898-residue protein sequence, read N- to C-terminus: Alanine--tRNA ligase (898 aa).

Zn(2+) contacts are provided by His582, His586, Cys685, and His689.

This sequence belongs to the class-II aminoacyl-tRNA synthetase family. Zn(2+) serves as cofactor.

It is found in the cytoplasm. It catalyses the reaction tRNA(Ala) + L-alanine + ATP = L-alanyl-tRNA(Ala) + AMP + diphosphate. Its function is as follows. Catalyzes the attachment of alanine to tRNA(Ala) in a two-step reaction: alanine is first activated by ATP to form Ala-AMP and then transferred to the acceptor end of tRNA(Ala). Also edits incorrectly charged Ser-tRNA(Ala) and Gly-tRNA(Ala) via its editing domain. The sequence is that of Alanine--tRNA ligase from Mycolicibacterium gilvum (strain PYR-GCK) (Mycobacterium gilvum (strain PYR-GCK)).